A 116-amino-acid polypeptide reads, in one-letter code: Ribonuclease P protein component (116 aa).

Belongs to the RnpA family. In terms of assembly, consists of a catalytic RNA component (M1 or rnpB) and a protein subunit.

The enzyme catalyses Endonucleolytic cleavage of RNA, removing 5'-extranucleotides from tRNA precursor.. RNaseP catalyzes the removal of the 5'-leader sequence from pre-tRNA to produce the mature 5'-terminus. It can also cleave other RNA substrates such as 4.5S RNA. The protein component plays an auxiliary but essential role in vivo by binding to the 5'-leader sequence and broadening the substrate specificity of the ribozyme. The polypeptide is Ribonuclease P protein component (Exiguobacterium sibiricum (strain DSM 17290 / CCUG 55495 / CIP 109462 / JCM 13490 / 255-15)).